The sequence spans 86 residues: Large ribosomal subunit protein bL31B (86 aa).

Belongs to the bacterial ribosomal protein bL31 family. Type B subfamily. Part of the 50S ribosomal subunit.

This chain is Large ribosomal subunit protein bL31B, found in Cupriavidus pinatubonensis (strain JMP 134 / LMG 1197) (Cupriavidus necator (strain JMP 134)).